We begin with the raw amino-acid sequence, 158 residues long: 2-C-methyl-D-erythritol 2,4-cyclodiphosphate synthase (158 aa).

2 residues coordinate a divalent metal cation: Asp8 and His10. 4-CDP-2-C-methyl-D-erythritol 2-phosphate contacts are provided by residues 8-10 (DVH) and 34-35 (HS). A divalent metal cation is bound at residue His42. 4-CDP-2-C-methyl-D-erythritol 2-phosphate is bound by residues 56–58 (DIG), 61–65 (FPDTD), 100–106 (AQKPKML), 132–135 (TTEE), Phe139, and Lys142.

The protein belongs to the IspF family. In terms of assembly, homotrimer. A divalent metal cation is required as a cofactor.

It carries out the reaction 4-CDP-2-C-methyl-D-erythritol 2-phosphate = 2-C-methyl-D-erythritol 2,4-cyclic diphosphate + CMP. It participates in isoprenoid biosynthesis; isopentenyl diphosphate biosynthesis via DXP pathway; isopentenyl diphosphate from 1-deoxy-D-xylulose 5-phosphate: step 4/6. In terms of biological role, involved in the biosynthesis of isopentenyl diphosphate (IPP) and dimethylallyl diphosphate (DMAPP), two major building blocks of isoprenoid compounds. Catalyzes the conversion of 4-diphosphocytidyl-2-C-methyl-D-erythritol 2-phosphate (CDP-ME2P) to 2-C-methyl-D-erythritol 2,4-cyclodiphosphate (ME-CPP) with a corresponding release of cytidine 5-monophosphate (CMP). The sequence is that of 2-C-methyl-D-erythritol 2,4-cyclodiphosphate synthase from Clostridium tetani (strain Massachusetts / E88).